A 159-amino-acid polypeptide reads, in one-letter code: MRPLVIILMGSSSDMGHAEKIASELKTFGIEYAIRIGSAHKTAEHVVSMLKEYEALDRPKLYITIAGRSNALSGFVDGFVKGATIACPPPSDSFAGADIYSSLRMPSGISPALVLEPKNAALLAARIFSLYDKEIADSVKSYMESNAQKIIEDDSKLKR.

Residues S11, D14, S38, K41, G67, and S69 each coordinate substrate.

It catalyses the reaction 5-amino-1-(5-phospho-D-ribosyl)imidazole-4-carboxylate + H(+) = 5-amino-1-(5-phospho-beta-D-ribosyl)imidazole + CO2. The protein operates within purine metabolism; IMP biosynthesis via de novo pathway; 5-amino-1-(5-phospho-D-ribosyl)imidazole-4-carboxylate from 5-amino-1-(5-phospho-D-ribosyl)imidazole (carboxylase route): step 1/1. Functionally, catalyzes the reversible conversion of 5-aminoimidazole ribonucleotide (AIR) and CO(2) to 4-carboxy-5-aminoimidazole ribonucleotide (CAIR). Does not accept N5-carboxyaminoimidazole ribonucleotide (N5-CAIR) as a substrate. This Treponema denticola (strain ATCC 35405 / DSM 14222 / CIP 103919 / JCM 8153 / KCTC 15104) protein is Phosphoribosylaminoimidazole carboxylase.